Here is an 83-residue protein sequence, read N- to C-terminus: Bublin coiled-coil protein (83 aa).

A disordered region spans residues M1–G24. A coiled-coil region spans residues E25–L74. S82 is subject to Phosphoserine.

This sequence belongs to the UPF0184 (EST00098) family.

It is found in the cell junction. It localises to the cytoplasm. Its subcellular location is the cytoskeleton. In terms of biological role, essential for intermediate filament organization in intestinal cells, interacts with intermediate filament and regulates intestinal lumen morphology. The sequence is that of Bublin coiled-coil protein from Homo sapiens (Human).